The following is a 419-amino-acid chain: Adenylosuccinate synthetase (419 aa).

Residues 11 to 17 (GDEGKGK) and 39 to 41 (GHS) contribute to the GTP site. Aspartate 12 functions as the Proton acceptor in the catalytic mechanism. Mg(2+) is bound by residues aspartate 12 and glycine 39. IMP is bound by residues 12–15 (DEGK), 37–40 (NAGH), threonine 129, arginine 143, asparagine 221, threonine 236, and arginine 296. Residue histidine 40 is the Proton donor of the active site. 292–298 (VSTGRKR) contributes to the substrate binding site. GTP is bound by residues arginine 298, 324-326 (KLD), and 408-410 (GTG).

This sequence belongs to the adenylosuccinate synthetase family. Homodimer. Mg(2+) is required as a cofactor.

Its subcellular location is the cytoplasm. It catalyses the reaction IMP + L-aspartate + GTP = N(6)-(1,2-dicarboxyethyl)-AMP + GDP + phosphate + 2 H(+). Its pathway is purine metabolism; AMP biosynthesis via de novo pathway; AMP from IMP: step 1/2. Functionally, plays an important role in the de novo pathway and in the salvage pathway of purine nucleotide biosynthesis. Catalyzes the first committed step in the biosynthesis of AMP from IMP. This chain is Adenylosuccinate synthetase, found in Chaetomium globosum (strain ATCC 6205 / CBS 148.51 / DSM 1962 / NBRC 6347 / NRRL 1970) (Soil fungus).